Consider the following 411-residue polypeptide: Receptor GIN3 (411 aa).

The Extracellular segment spans residues 1–99; it reads MSGFVAGEEA…LLPILPHPRN (99 aa). A helical transmembrane segment spans residues 100–120; the sequence is IPIIVPLFCVFTVMTSLAVGL. The Cytoplasmic portion of the chain corresponds to 121–134; the sequence is RLWSRQKVAGGIRS. The chain crosses the membrane as a helical span at residues 135–155; the sequence is FDWLALAGFGLTIIYGAVSVY. Residues 156–181 are Extracellular-facing; it reads HSKVSGPYQAFYDRTWDQMKENYKVY. The helical transmembrane segment at 182–202 threads the bilayer; the sequence is LVLTIMYPFIMGLIKISLLLF. Residues 203–227 lie on the Cytoplasmic side of the membrane; that stretch reads YYRVATLNYVQWAVYATGSLTIANS. The chain crosses the membrane as a helical span at residues 228–248; sequence IAAIITHCLAFMPIDFWNHFL. The Extracellular portion of the chain corresponds to 249-262; that stretch reads QSPFKFNSRTPMLV. The helical transmembrane segment at 263–283 threads the bilayer; that stretch reads FGAVYILTDVAILIIPMPMVF. The Cytoplasmic segment spans residues 284–292; the sequence is QLKLYPREK. A helical membrane pass occupies residues 293–313; it reads VIAVIAFSLGGVACVASGFRI. Residues 314–328 lie on the Extracellular side of the membrane; that stretch reads WAIDEFQNYSGKNSS. N-linked (GlcNAc...) asparagine glycosylation is found at Asn321 and Asn326. A helical transmembrane segment spans residues 329-349; sequence GLMIDAWTMIELNLTLICASA. Residues 350-411 are Cytoplasmic-facing; it reads PAIRALAIHY…QSPVIPKEVV (62 aa). The interval 371–411 is disordered; that stretch reads FSSSGATRGSKSAGSSGKSKTPESEKSMQVSQSPVIPKEVV. Over residues 372–389 the composition is skewed to low complexity; it reads SSSGATRGSKSAGSSGKS.

Belongs to the SAT4 family. As to quaternary structure, interacts with guanine nucleotide-binding protein alpha GPA2; to activate adenylate cyclase and positively regulate nematode trap formation.

The protein resides in the cell membrane. In terms of biological role, receptor that senses nematode-derived signals at the cell surface and signals via adenylate cyclase to positively regulate trap formation for nematode capture. In Arthrobotrys oligospora (strain ATCC 24927 / CBS 115.81 / DSM 1491) (Nematode-trapping fungus), this protein is Receptor GIN3.